A 235-amino-acid chain; its full sequence is Voltage-gated hydrogen channel 1 (235 aa).

Residues 1–62 are Cytoplasmic-facing; the sequence is MSRYLKHFTV…VMKKLFSSRR (62 aa). A helical transmembrane segment spans residues 63–83; the sequence is FQIVIVFLVIVDALLVLGELL. Residues 84-100 lie on the Extracellular side of the membrane; it reads MDLKIIHPDKYHIAPKV. The chain crosses the membrane as a helical span at residues 101–123; sequence FHYLSLSILTIFLVEVGFKIFVY. At 124–131 the chain is on the cytoplasmic side; it reads GREFFHHK. Residues 132-152 form a helical membrane-spanning segment; sequence FEVLDSIVVVVSFILDLVLLF. Residues 153–159 are Extracellular-facing; sequence REHEFEA. The helical transmembrane segment at 160–180 threads the bilayer; it reads VGLLILLRLWRVARIINGIIL. Topologically, residues 181 to 235 are cytoplasmic; sequence SVKTRSEQQVSKLKQVNLKLATKVEQLQHSCVEKEQEIERLTRMLKQHGLLSEQT. Positions 187–228 form a coiled coil; it reads EQQVSKLKQVNLKLATKVEQLQHSCVEKEQEIERLTRMLKQH.

This sequence belongs to the hydrogen channel family. Homodimer.

The protein localises to the membrane. The protein resides in the cell membrane. Mediates the voltage-dependent proton permeability of excitable membranes. Forms a proton-selective channel through which protons may pass in accordance with their electrochemical gradient. The sequence is that of Voltage-gated hydrogen channel 1 (HVCN1) from Gallus gallus (Chicken).